Reading from the N-terminus, the 273-residue chain is Probable NAD(P)H dehydrogenase (quinone) FQR1-like 2 (273 aa).

The disordered stretch occupies residues 1–60 (MGKGGGCVPSKKKKPATTGDGPGIDDDNDATNAPIQIDDDQTTIDGDRTTATNTGGTTTP). Over residues 49–60 (TTATNTGGTTTP) the composition is skewed to low complexity. In terms of domain architecture, Flavodoxin-like spans 75–263 (IFVVFYSMYG…ALAEHQGNYM (189 aa)). FMN is bound by residues 81–85 (SMYGH), 183–236 (FFVS…SPYG), and His207. Tyr83 is an NAD(+) binding site.

The protein belongs to the WrbA family. FMN is required as a cofactor.

The protein resides in the cell membrane. It carries out the reaction a quinone + NADH + H(+) = a quinol + NAD(+). The enzyme catalyses a quinone + NADPH + H(+) = a quinol + NADP(+). Its function is as follows. Catalyzes the transfer of electrons from NADH and NADPH to reduce quinone to the hydroquinone state. The polypeptide is Probable NAD(P)H dehydrogenase (quinone) FQR1-like 2 (Arabidopsis thaliana (Mouse-ear cress)).